Reading from the N-terminus, the 273-residue chain is Dermonecrotic toxin LvSicTox-alphaIC1ai (273 aa).

H5 is an active-site residue. Mg(2+)-binding residues include E25 and D27. Catalysis depends on H41, which acts as the Nucleophile. Intrachain disulfides connect C45–C51 and C47–C190. D85 serves as a coordination point for Mg(2+).

The protein belongs to the arthropod phospholipase D family. Class II subfamily. It depends on Mg(2+) as a cofactor. In terms of tissue distribution, expressed by the venom gland.

The protein resides in the secreted. The catalysed reaction is an N-(acyl)-sphingosylphosphocholine = an N-(acyl)-sphingosyl-1,3-cyclic phosphate + choline. The enzyme catalyses an N-(acyl)-sphingosylphosphoethanolamine = an N-(acyl)-sphingosyl-1,3-cyclic phosphate + ethanolamine. It carries out the reaction a 1-acyl-sn-glycero-3-phosphocholine = a 1-acyl-sn-glycero-2,3-cyclic phosphate + choline. It catalyses the reaction a 1-acyl-sn-glycero-3-phosphoethanolamine = a 1-acyl-sn-glycero-2,3-cyclic phosphate + ethanolamine. Functionally, dermonecrotic toxins cleave the phosphodiester linkage between the phosphate and headgroup of certain phospholipids (sphingolipid and lysolipid substrates), forming an alcohol (often choline) and a cyclic phosphate. This toxin acts on sphingomyelin (SM). It may also act on ceramide phosphoethanolamine (CPE), lysophosphatidylcholine (LPC) and lysophosphatidylethanolamine (LPE), but not on lysophosphatidylserine (LPS), and lysophosphatidylglycerol (LPG). It acts by transphosphatidylation, releasing exclusively cyclic phosphate products as second products. Induces dermonecrosis, hemolysis, increased vascular permeability, edema, inflammatory response, and platelet aggregation. The chain is Dermonecrotic toxin LvSicTox-alphaIC1ai from Loxosceles variegata (Recluse spider).